A 276-amino-acid polypeptide reads, in one-letter code: MTWNATLALDYTRQAEKTVAHFRHSGPLRILQSLYPEGDGICHNVIVHPPGGLVGGDTLDLAFTAGAGAHGLVTTPGATRFYRSTGEPALQRTRLSLEAGARMEWLPLEAICYSGCLAENRLTMELASGAELIGWDVTAFGLPAASLPFAHGHFCQHIEMPGVWLERARIAAGDTLLMDSPLGLAGQRCMASIFFVAGSKLERNRRQQALDVAREVIEAHALRATAGATSPDGQVVVVRVLAPLVEPAMTLLRQVWQAWRSHFWQQPAALPRIWSM.

It belongs to the UreD family. As to quaternary structure, ureD, UreF and UreG form a complex that acts as a GTP-hydrolysis-dependent molecular chaperone, activating the urease apoprotein by helping to assemble the nickel containing metallocenter of UreC. The UreE protein probably delivers the nickel.

It is found in the cytoplasm. Its function is as follows. Required for maturation of urease via the functional incorporation of the urease nickel metallocenter. In Polaromonas naphthalenivorans (strain CJ2), this protein is Urease accessory protein UreD.